A 217-amino-acid polypeptide reads, in one-letter code: MRLRHKPYAMDRINEYSHIVIGNPEERAGSWKEVFGNEQPIHIEVGTGRGRFMYDMAKANPHINYIGIEKFTSVVVDALDKLIEEELPNLKLINKDAEDLTVFFAKGEIDRVYLNFSDPWPKKRHTKRRLTYKTFLRNYEEVLVEGGEIHFKTDNQGLFEYSLMSMAEYGMLLTYLSLDLHNSDFEGNIMTEYEEKFSSKGHRIYRVEAKYRTEPMQ.

Glu-44, Glu-69, Asp-96, and Asp-118 together coordinate S-adenosyl-L-methionine. Residue Asp-118 is part of the active site. Substrate contacts are provided by residues Lys-122, Asp-154, and 191–194 (TEYE).

Belongs to the class I-like SAM-binding methyltransferase superfamily. TrmB family.

The catalysed reaction is guanosine(46) in tRNA + S-adenosyl-L-methionine = N(7)-methylguanosine(46) in tRNA + S-adenosyl-L-homocysteine. It participates in tRNA modification; N(7)-methylguanine-tRNA biosynthesis. Its function is as follows. Catalyzes the formation of N(7)-methylguanine at position 46 (m7G46) in tRNA. The chain is tRNA (guanine-N(7)-)-methyltransferase from Bacillus cereus (strain B4264).